The following is a 212-amino-acid chain: Inner membrane-spanning protein YciB (212 aa).

Transmembrane regions (helical) follow at residues Phe-19–Leu-39, Ala-47–Leu-67, Ala-82–Trp-102, Thr-105–Gly-122, Leu-147–Phe-167, and Leu-177–Leu-197.

It belongs to the YciB family.

Its subcellular location is the cell inner membrane. Functionally, plays a role in cell envelope biogenesis, maintenance of cell envelope integrity and membrane homeostasis. In Thioalkalivibrio sulfidiphilus (strain HL-EbGR7), this protein is Inner membrane-spanning protein YciB.